Consider the following 1091-residue polypeptide: MVKPNNVKIKNKGNLKKSNESQNDYMKGKKLETKSYQKALLSKNSNNNNDGAQAKRLKKKEEFKKKLEKRQNTIVIKDKLKEPSTFLKEDQSFFDQNIFNDQDDYKHQQMNRININENFETNLFGDMMNEFDGDLNEDLDLLDYNDEVIDNSNFDNNGDQFNSEDEEFYDDEKQAKKSNKNKNADADNKKSKKSNKKEEIESSEKFESFPMDENNEQEEETTSKKKKKTGGFQSMDLTKNLLKAILKKGFNVPTPIQRKSIPMILDGHDIVGMARTGSGKTGAFVIPMIQKLGDHSTTVGVRAVILSPTRELAIQTFKVVKDFSQGTQLRTILIVGGDSMEDQFTDLARNPDIIIATPGRLMHHLLETGMSLSKVQYIVFDEADRLFEMGFNEQLTEILSKLSENRQTLLFSATLPSLLVDFVRAGLNNPKLINLDTDTKISENLSLSFFTLRHEEKLGVLLFLLKDIIYKKPQLPTTETTTTTTTNNESNQQQQKKSSTIIFVSTKYHVEFIHILLERAGIASTYIHGYLDPVARKINLAKFRSHQVGVMVVTDLAARGIDIPLLDNVINFDFPPKEKIFIHRVGRVARAGRSGIAYSLVSPDEVPYMIDLHLYLGRKFLNKFQYEGQTINDPKYSFYGTIPQTIIDRETEFVNVQRKECIELLSLTKTIHNAHKKYLSTRPGASHESNRRAKLMDKSKYHPMLSDHLNSNDQIRNDFIQSLKSFRPPQTVLELDARKNNVQVSIMKDKRKVHTNVIESQQKKLYLQQSETNLGPENEEFDYSKLDTRKRLLQLTENITEEMLRSNKSNDNNDNNKDIKMNENDDENDDDDEEGENDDDEEEENEKDEDDEEDENKNKFNIKIESSDKNDNNKKKLKSRSSSRDPNFFISATPENLIQERAMSISNRFTKDDEVNLVADTDRKQKKSMVWDKRKGKFVSSQADADRKNSKKLVRNEAGKLVEAKKSHKGYEEWKKKTHGRIQRVGEDENSKYQPNQKEYLPQKWRGQGREKEKKDNKASHAKGSHGLKGRPSELKDKNQISKNRSEKERKMRVNKTKGNPKGSKSKSGGGGGGKGSKFGSGKSKGGKSRK.

Disordered stretches follow at residues 1-63 and 150-231; these read MVKP…KEEF and DNSN…KTGG. A compositionally biased stretch (basic and acidic residues) spans 26–35; the sequence is MKGKKLETKS. A compositionally biased stretch (polar residues) spans 150–161; sequence DNSNFDNNGDQF. Over residues 196–207 the composition is skewed to basic and acidic residues; that stretch reads KKEEIESSEKFE. The short motif at 230-258 is the Q motif element; that stretch reads GGFQSMDLTKNLLKAILKKGFNVPTPIQR. A Helicase ATP-binding domain is found at 261-433; that stretch reads IPMILDGHDI…RAGLNNPKLI (173 aa). 274 to 281 lines the ATP pocket; sequence ARTGSGKT. A DEAD box motif is present at residues 381–384; the sequence is DEAD. The 155-residue stretch at 478 to 632 folds into the Helicase C-terminal domain; that stretch reads TETTTTTTTN…KFQYEGQTIN (155 aa). 2 disordered regions span residues 801–896 and 933–1091; these read EEML…TPEN and KRKG…KSRK. Residues 814–823 show a composition bias toward basic and acidic residues; the sequence is DNNKDIKMNE. A compositionally biased stretch (acidic residues) spans 824 to 855; it reads NDDENDDDDEEGENDDDEEEENEKDEDDEEDE. 3 stretches are compositionally biased toward basic and acidic residues: residues 865–874, 944–975, and 1008–1019; these read ESSDKNDNNK, DADR…EEWK, and QGREKEKKDNKA. The span at 1020–1029 shows a compositional bias: basic residues; sequence SHAKGSHGLK. Residues 1031 to 1052 are compositionally biased toward basic and acidic residues; the sequence is RPSELKDKNQISKNRSEKERKM. Gly residues predominate over residues 1068–1079; the sequence is SGGGGGGKGSKF.

The protein belongs to the DEAD box helicase family. DDX54/DBP10 subfamily.

Its subcellular location is the nucleus. The protein localises to the nucleolus. The enzyme catalyses ATP + H2O = ADP + phosphate + H(+). In terms of biological role, ATP-binding RNA helicase which may be involved in the ribosome biogenesis. In Dictyostelium discoideum (Social amoeba), this protein is ATP-dependent RNA helicase ddx54 (helA).